Here is a 355-residue protein sequence, read N- to C-terminus: Holliday junction branch migration complex subunit RuvB (355 aa).

The tract at residues 1–26 (MSIQTDDFASSSPAARRVVSTAPASP) is disordered. The large ATPase domain (RuvB-L) stretch occupies residues 5–196 (TDDFASSSPA…FGIVARLEFY (192 aa)). A compositionally biased stretch (low complexity) spans 9–22 (ASSSPAARRVVSTA). Residues Leu-35, Arg-36, Gly-77, Lys-80, Thr-81, Thr-82, 143–145 (EDY), Arg-186, Tyr-196, and Arg-233 each bind ATP. Thr-81 is a Mg(2+) binding site. The interval 197-267 (SVEELARIVT…IADKALAMLD (71 aa)) is small ATPAse domain (RuvB-S). A head domain (RuvB-H) region spans residues 270–355 (PQGFDVMDRK…TTSGSELFDA (86 aa)). Arg-325 and Arg-330 together coordinate DNA.

This sequence belongs to the RuvB family. Homohexamer. Forms an RuvA(8)-RuvB(12)-Holliday junction (HJ) complex. HJ DNA is sandwiched between 2 RuvA tetramers; dsDNA enters through RuvA and exits via RuvB. An RuvB hexamer assembles on each DNA strand where it exits the tetramer. Each RuvB hexamer is contacted by two RuvA subunits (via domain III) on 2 adjacent RuvB subunits; this complex drives branch migration. In the full resolvosome a probable DNA-RuvA(4)-RuvB(12)-RuvC(2) complex forms which resolves the HJ.

The protein resides in the cytoplasm. It catalyses the reaction ATP + H2O = ADP + phosphate + H(+). In terms of biological role, the RuvA-RuvB-RuvC complex processes Holliday junction (HJ) DNA during genetic recombination and DNA repair, while the RuvA-RuvB complex plays an important role in the rescue of blocked DNA replication forks via replication fork reversal (RFR). RuvA specifically binds to HJ cruciform DNA, conferring on it an open structure. The RuvB hexamer acts as an ATP-dependent pump, pulling dsDNA into and through the RuvAB complex. RuvB forms 2 homohexamers on either side of HJ DNA bound by 1 or 2 RuvA tetramers; 4 subunits per hexamer contact DNA at a time. Coordinated motions by a converter formed by DNA-disengaged RuvB subunits stimulates ATP hydrolysis and nucleotide exchange. Immobilization of the converter enables RuvB to convert the ATP-contained energy into a lever motion, pulling 2 nucleotides of DNA out of the RuvA tetramer per ATP hydrolyzed, thus driving DNA branch migration. The RuvB motors rotate together with the DNA substrate, which together with the progressing nucleotide cycle form the mechanistic basis for DNA recombination by continuous HJ branch migration. Branch migration allows RuvC to scan DNA until it finds its consensus sequence, where it cleaves and resolves cruciform DNA. The polypeptide is Holliday junction branch migration complex subunit RuvB (Methylibium petroleiphilum (strain ATCC BAA-1232 / LMG 22953 / PM1)).